The chain runs to 91 residues: PqqA binding protein (91 aa).

The protein belongs to the PqqD family. In terms of assembly, monomer. Interacts with PqqE.

Its pathway is cofactor biosynthesis; pyrroloquinoline quinone biosynthesis. Functions as a PqqA binding protein and presents PqqA to PqqE, in the pyrroloquinoline quinone (PQQ) biosynthetic pathway. This Pseudomonas fluorescens (strain SBW25) protein is PqqA binding protein.